Here is a 258-residue protein sequence, read N- to C-terminus: Regulatory protein RecX (258 aa).

It belongs to the RecX family.

It is found in the cytoplasm. In terms of biological role, modulates RecA activity. This is Regulatory protein RecX from Streptococcus pyogenes serotype M12 (strain MGAS2096).